Reading from the N-terminus, the 363-residue chain is Probable methyltransferase-like protein 24 (363 aa).

The first 38 residues, Met-1–Ser-38, serve as a signal peptide directing secretion. Residues Gly-37 to Arg-62 form a disordered region.

It belongs to the methyltransferase superfamily.

It is found in the secreted. In terms of biological role, probable methyltransferase. The chain is Probable methyltransferase-like protein 24 (Mettl24) from Rattus norvegicus (Rat).